We begin with the raw amino-acid sequence, 371 residues long: tRNA-specific 2-thiouridylase MnmA (371 aa).

Residues 7-14 (AMSGGVDS) and L33 each bind ATP. C101 serves as the catalytic Nucleophile. C101 and C213 are oxidised to a cystine. Position 125 (G125) interacts with ATP. Residues 163-165 (KDQ) form an interaction with tRNA region. C213 (cysteine persulfide intermediate) is an active-site residue.

Belongs to the MnmA/TRMU family.

The protein resides in the cytoplasm. It catalyses the reaction S-sulfanyl-L-cysteinyl-[protein] + uridine(34) in tRNA + AH2 + ATP = 2-thiouridine(34) in tRNA + L-cysteinyl-[protein] + A + AMP + diphosphate + H(+). In terms of biological role, catalyzes the 2-thiolation of uridine at the wobble position (U34) of tRNA, leading to the formation of s(2)U34. This chain is tRNA-specific 2-thiouridylase MnmA, found in Roseiflexus castenholzii (strain DSM 13941 / HLO8).